We begin with the raw amino-acid sequence, 363 residues long: MDNYTYSELLKSLQNKCDNIALIIKPEKIKQELERIEKEQEDPNFWQDVLKARDTNKEKVRLNRLLETYQKTKNSLDESTELFELAQNDNDEVTLSLLYEEAPVLEHSVQKVEIEIMLSGENDASNAIITIQPGAGGTESQDWASILYRMYLRWAERRGFKSEILDYQDGEEAGIKGVAFIIKGENAYGYLKNENGVHRLVRISPFDANAKRHTSFASVQISPELDDDIDIEIDEKDVRYDYYRASGAGGQHVNKTESAVRITHFPTGIVVQCQNDRSQHKNKASALKMLKSKLYELELEKQQSTAKNEEKSEIGWGHQIRSYVLAPYQQVKDARSNTAYSNVEAILDGDIDAILEGVLIAKA.

An N5-methylglutamine modification is found at glutamine 251.

The protein belongs to the prokaryotic/mitochondrial release factor family. In terms of processing, methylated by PrmC. Methylation increases the termination efficiency of RF2.

Its subcellular location is the cytoplasm. Functionally, peptide chain release factor 2 directs the termination of translation in response to the peptide chain termination codons UGA and UAA. In Helicobacter pylori (strain Shi470), this protein is Peptide chain release factor 2.